Reading from the N-terminus, the 256-residue chain is tRNA-cytidine(32) 2-sulfurtransferase (256 aa).

The PP-loop motif motif lies at 35-40 (SGGKDS). Residues cysteine 110, cysteine 113, and cysteine 201 each coordinate [4Fe-4S] cluster.

The protein belongs to the TtcA family. In terms of assembly, homodimer. Mg(2+) is required as a cofactor. It depends on [4Fe-4S] cluster as a cofactor.

It localises to the cytoplasm. The catalysed reaction is cytidine(32) in tRNA + S-sulfanyl-L-cysteinyl-[cysteine desulfurase] + AH2 + ATP = 2-thiocytidine(32) in tRNA + L-cysteinyl-[cysteine desulfurase] + A + AMP + diphosphate + H(+). It participates in tRNA modification. Catalyzes the ATP-dependent 2-thiolation of cytidine in position 32 of tRNA, to form 2-thiocytidine (s(2)C32). The sulfur atoms are provided by the cysteine/cysteine desulfurase (IscS) system. In Coxiella burnetii (strain RSA 493 / Nine Mile phase I), this protein is tRNA-cytidine(32) 2-sulfurtransferase.